The primary structure comprises 180 residues: uncharacterized protein (180 aa).

The disordered stretch occupies residues 138–180 (SVMPVPMPQQNSDNGSTPHIVDSSKSKDKSSNDGDNGVFTGDE). Over residues 145–154 (PQQNSDNGST) the composition is skewed to polar residues. Residues 159 to 169 (DSSKSKDKSSN) show a composition bias toward basic and acidic residues.

This is an uncharacterized protein from Acidianus filamentous virus 2 (isolate Italy/Pozzuoli) (AFV-2).